The following is a 387-amino-acid chain: Succinate--CoA ligase [ADP-forming] subunit beta (387 aa).

In terms of domain architecture, ATP-grasp spans 9-244 (KRLLAEEGVP…STQQDGREIT (236 aa)). ATP contacts are provided by residues K46, 53-55 (GRG), E99, S102, and E107. Mg(2+)-binding residues include N199 and D213. Residues N264 and 321-323 (GIT) each bind substrate.

This sequence belongs to the succinate/malate CoA ligase beta subunit family. In terms of assembly, heterotetramer of two alpha and two beta subunits. Mg(2+) serves as cofactor.

It catalyses the reaction succinate + ATP + CoA = succinyl-CoA + ADP + phosphate. The enzyme catalyses GTP + succinate + CoA = succinyl-CoA + GDP + phosphate. It functions in the pathway carbohydrate metabolism; tricarboxylic acid cycle; succinate from succinyl-CoA (ligase route): step 1/1. Functionally, succinyl-CoA synthetase functions in the citric acid cycle (TCA), coupling the hydrolysis of succinyl-CoA to the synthesis of either ATP or GTP and thus represents the only step of substrate-level phosphorylation in the TCA. The beta subunit provides nucleotide specificity of the enzyme and binds the substrate succinate, while the binding sites for coenzyme A and phosphate are found in the alpha subunit. In Acidithiobacillus ferrooxidans (strain ATCC 23270 / DSM 14882 / CIP 104768 / NCIMB 8455) (Ferrobacillus ferrooxidans (strain ATCC 23270)), this protein is Succinate--CoA ligase [ADP-forming] subunit beta.